The sequence spans 214 residues: Ribonuclease S-2 (214 aa).

The N-terminal stretch at 1–22 (MSKSQLTSVFFILLCALSPIYG) is a signal peptide. A disulfide bridge connects residues Cys38 and Cys43. Asn49 is a glycosylation site (N-linked (GlcNAc...) asparagine). His53 acts as the Proton donor in catalysis. His53 provides a ligand contact to RNA. N-linked (GlcNAc...) asparagine glycosylation is present at Asn59. Cys67 and Cys116 are oxidised to a cystine. Residues 91 to 92 (DL), Lys94, and Phe105 each bind RNA. The active site involves Glu109. 112-113 (KH) contributes to the RNA binding site. Catalysis depends on His113, which acts as the Proton acceptor. Asn160 is a glycosylation site (N-linked (GlcNAc...) asparagine). 2 disulfides stabilise this stretch: Cys175–Cys204 and Cys187–Cys198.

Belongs to the RNase T2 family.

It is found in the secreted. The protein resides in the extracellular space. It carries out the reaction a ribonucleotidyl-ribonucleotide-RNA + H2O = a 3'-end 3'-phospho-ribonucleotide-RNA + a 5'-end dephospho-ribonucleoside-RNA + H(+). Functionally, self-incompatibility (SI) is the inherited ability of a flowering plant to prevent self-fertilization by discriminating between self and non-self pollen during pollination. In many species of the Solanaceae, self-incompatibility is controlled by the single, multiallelic locus S. This stylar glycoprotein is associated with expression of self-incompatibility in potato. In Nicotiana alata (Winged tobacco), this protein is Ribonuclease S-2 (S-2).